A 180-amino-acid chain; its full sequence is Large ribosomal subunit protein bL17 (180 aa).

The interval 134 to 180 (AQAKAKKAAAMPTEESEAKPAEEGDVVGASEPDAKAPEEPPTEAPEN) is disordered.

The protein belongs to the bacterial ribosomal protein bL17 family. Part of the 50S ribosomal subunit. Contacts protein L32.

This is Large ribosomal subunit protein bL17 from Mycobacterium tuberculosis (strain CDC 1551 / Oshkosh).